Consider the following 238-residue polypeptide: Ribonuclease PH (238 aa).

Residues R86 and 124–126 each bind phosphate; that span reads GTR.

It belongs to the RNase PH family. In terms of assembly, homohexameric ring arranged as a trimer of dimers.

It carries out the reaction tRNA(n+1) + phosphate = tRNA(n) + a ribonucleoside 5'-diphosphate. Phosphorolytic 3'-5' exoribonuclease that plays an important role in tRNA 3'-end maturation. Removes nucleotide residues following the 3'-CCA terminus of tRNAs; can also add nucleotides to the ends of RNA molecules by using nucleoside diphosphates as substrates, but this may not be physiologically important. Probably plays a role in initiation of 16S rRNA degradation (leading to ribosome degradation) during starvation. The polypeptide is Ribonuclease PH (Shigella boydii serotype 18 (strain CDC 3083-94 / BS512)).